A 217-amino-acid chain; its full sequence is Proteasome subunit beta (217 aa).

Positions 1-14 (MIANNDQYKEYMKG) are cleaved as a propeptide — removed in mature form; by autocatalysis. Residue Thr15 is the Nucleophile of the active site.

This sequence belongs to the peptidase T1B family. In terms of assembly, the 20S proteasome core is composed of 14 alpha and 14 beta subunits that assemble into four stacked heptameric rings, resulting in a barrel-shaped structure. The two inner rings, each composed of seven catalytic beta subunits, are sandwiched by two outer rings, each composed of seven alpha subunits. The catalytic chamber with the active sites is on the inside of the barrel. Has a gated structure, the ends of the cylinder being occluded by the N-termini of the alpha-subunits. Is capped at one or both ends by the proteasome regulatory ATPase, PAN.

It localises to the cytoplasm. The enzyme catalyses Cleavage of peptide bonds with very broad specificity.. The formation of the proteasomal ATPase PAN-20S proteasome complex, via the docking of the C-termini of PAN into the intersubunit pockets in the alpha-rings, triggers opening of the gate for substrate entry. Interconversion between the open-gate and close-gate conformations leads to a dynamic regulation of the 20S proteasome proteolysis activity. Component of the proteasome core, a large protease complex with broad specificity involved in protein degradation. The protein is Proteasome subunit beta of Methanococcus aeolicus (strain ATCC BAA-1280 / DSM 17508 / OCM 812 / Nankai-3).